The chain runs to 1284 residues: Zinc finger protein 423 (1284 aa).

Disordered stretches follow at residues M1 to E64 and A87 to Q117. Over residues C34–N46 the composition is skewed to basic and acidic residues. Residues S47 and S50 each carry the phosphoserine modification. A compositionally biased stretch (acidic residues) spans R54 to E64. The C2H2-type 1; degenerate zinc finger occupies Y67–D93. Over residues W102–Q117 the composition is skewed to polar residues. 7 consecutive C2H2-type zinc fingers follow at residues Y138 to H160, F166 to H188, Y194 to H216, F222 to H244, F263 to H286, L295 to H318, and H323 to H345. The segment at R346–R398 is disordered. The span at S363–S377 shows a compositional bias: low complexity. The segment at Y409–H433 adopts a C2H2-type 9; degenerate zinc-finger fold. C2H2-type zinc fingers lie at residues H441–H464, F480–H503, and F517–H540. A C2H2-type 13; atypical zinc finger spans residues Y563 to H588. A disordered region spans residues N590–A624. The residue at position 604 (S604) is a Phosphoserine. The span at S604–P615 shows a compositional bias: low complexity. 7 consecutive C2H2-type zinc fingers follow at residues Y632–H654, Q662–H684, Y692–H715, Y720–H743, Y750–H773, H781–H803, and Y807–H830. The C2H2-type 21; degenerate zinc finger occupies Y886–D908. 3 C2H2-type zinc fingers span residues H930 to H952, Y959 to H981, and F1020 to H1042. A Phosphoserine modification is found at S1054. The C2H2-type 25; degenerate zinc-finger motif lies at Y1064–L1082. 5 consecutive C2H2-type zinc fingers follow at residues L1120 to H1143, Y1168 to H1190, H1198 to H1220, F1229 to H1252, and Y1259 to H1282. Residues E1136–T1147 show a composition bias toward basic and acidic residues. Residues E1136–P1163 are disordered.

This sequence belongs to the krueppel C2H2-type zinc-finger protein family. In terms of assembly, homodimer. Interacts with EBF1. Interacts with SMAD1 and SMAD4. Interacts with PARP1. Interacts with CEP290. Expressed in brain, lung, skeletal muscle, heart, pancreas and kidney but not liver or placenta. Also expressed in aorta, ovary, pituitary, small intestine, fetal brain, fetal kidney and, within the adult brain, in the substantia nigra, medulla, amygdala, thalamus and cerebellum.

The protein resides in the nucleus. In terms of biological role, transcription factor that can both act as an activator or a repressor depending on the context. Plays a central role in BMP signaling and olfactory neurogenesis. Associates with SMADs in response to BMP2 leading to activate transcription of BMP target genes. Acts as a transcriptional repressor via its interaction with EBF1, a transcription factor involved in terminal olfactory receptor neurons differentiation; this interaction preventing EBF1 to bind DNA and activate olfactory-specific genes. Involved in olfactory neurogenesis by participating in a developmental switch that regulates the transition from differentiation to maturation in olfactory receptor neurons. Controls proliferation and differentiation of neural precursors in cerebellar vermis formation. This Homo sapiens (Human) protein is Zinc finger protein 423 (ZNF423).